The primary structure comprises 418 residues: Deubiquitinase and deneddylase Dub1 (418 aa).

Residues 1–11 (MLSPTNSTSKT) are compositionally biased toward polar residues. Positions 1-23 (MLSPTNSTSKTAPVPPQDSSKPV) are disordered. The chain crosses the membrane as a helical span at residues 40–60 (TALVVLLVVVTLGLILLFYSF). Residues 72 to 145 (TRPSTKEQPT…LPPKAPKPVK (74 aa)) are disordered. Over residues 86-141 (VPLPSPPLAVPRPSTPPPPVISRPSMPPAPTPAISPPSTPSAPKPSTPPPLPPKAP) the composition is skewed to pro residues. Residues His288, Asp305, and Cys358 contribute to the active site.

It belongs to the peptidase C48 family.

The protein resides in the secreted. Its subcellular location is the host cell. It localises to the membrane. Functionally, effector proteins function to alter host cell physiology and promote bacterial survival in host tissues. This protease possesses deubiquitinating and deneddylating activities. This is Deubiquitinase and deneddylase Dub1 (cdu1) from Chlamydia trachomatis serovar E (strain Sweden2).